We begin with the raw amino-acid sequence, 176 residues long: Co-chaperone protein HscB homolog (176 aa).

Positions 7–79 (THFSLFGLPE…LKRATYLLHL (73 aa)) constitute a J domain.

The protein belongs to the HscB family. Interacts with HscA and stimulates its ATPase activity.

In terms of biological role, co-chaperone involved in the maturation of iron-sulfur cluster-containing proteins. Seems to help targeting proteins to be folded toward HscA. This Ralstonia nicotianae (strain ATCC BAA-1114 / GMI1000) (Ralstonia solanacearum) protein is Co-chaperone protein HscB homolog.